Here is a 539-residue protein sequence, read N- to C-terminus: Probable malate:quinone oxidoreductase 3 (539 aa).

The segment at 516-539 (LEPPVSPQRPESIRPADSQGVASR) is disordered.

The protein belongs to the MQO family. It depends on FAD as a cofactor.

The catalysed reaction is (S)-malate + a quinone = a quinol + oxaloacetate. The protein operates within carbohydrate metabolism; tricarboxylic acid cycle; oxaloacetate from (S)-malate (quinone route): step 1/1. The polypeptide is Probable malate:quinone oxidoreductase 3 (Pseudomonas putida (strain ATCC 47054 / DSM 6125 / CFBP 8728 / NCIMB 11950 / KT2440)).